The chain runs to 75 residues: MARFFRRRKFCRFSADGVVQIDYKDIAMLKNYVTESGKIVPSRITGTSAKYQRQLSTAIKRARFLALLPYTDSHK.

The protein belongs to the bacterial ribosomal protein bS18 family. Part of the 30S ribosomal subunit. Forms a tight heterodimer with protein bS6.

Binds as a heterodimer with protein bS6 to the central domain of the 16S rRNA, where it helps stabilize the platform of the 30S subunit. This Pseudoalteromonas atlantica (strain T6c / ATCC BAA-1087) protein is Small ribosomal subunit protein bS18.